The chain runs to 427 residues: A-adding tRNA nucleotidyltransferase (427 aa).

49-52 (GTVR) lines the ATP pocket. Mg(2+) is bound by residues Asp62 and Asp64. Residues 136–137 (RD), Asn141, 181–190 (DPTRLLRGVR), Arg194, and Arg225 each bind ATP.

The protein belongs to the tRNA nucleotidyltransferase/poly(A) polymerase family. It depends on Mg(2+) as a cofactor.

It carries out the reaction a tRNA with a 3' CC end + ATP = a tRNA with a 3' CCA end + diphosphate. Functionally, tRNA nucleotidyltransferase involved in the synthesis of the tRNA CCA terminus. Adds the terminal adenosine residue to tRNA. This chain is A-adding tRNA nucleotidyltransferase, found in Halalkalibacterium halodurans (strain ATCC BAA-125 / DSM 18197 / FERM 7344 / JCM 9153 / C-125) (Bacillus halodurans).